A 247-amino-acid chain; its full sequence is Virulence plasmid protein pGP6-D (247 aa).

It belongs to the UPF0137 (pGP6-D) family.

In Chlamydia trachomatis, this protein is Virulence plasmid protein pGP6-D.